Here is a 390-residue protein sequence, read N- to C-terminus: Chorismate synthase (390 aa).

Positions 40 and 46 each coordinate NADP(+). Residues Arg129–Ser131, Gln249–Ala250, Gly294, Lys309–Thr313, and Arg335 each bind FMN.

Belongs to the chorismate synthase family. As to quaternary structure, homotetramer. FMNH2 serves as cofactor.

It carries out the reaction 5-O-(1-carboxyvinyl)-3-phosphoshikimate = chorismate + phosphate. It participates in metabolic intermediate biosynthesis; chorismate biosynthesis; chorismate from D-erythrose 4-phosphate and phosphoenolpyruvate: step 7/7. In terms of biological role, catalyzes the anti-1,4-elimination of the C-3 phosphate and the C-6 proR hydrogen from 5-enolpyruvylshikimate-3-phosphate (EPSP) to yield chorismate, which is the branch point compound that serves as the starting substrate for the three terminal pathways of aromatic amino acid biosynthesis. This reaction introduces a second double bond into the aromatic ring system. This chain is Chorismate synthase, found in Desulforudis audaxviator (strain MP104C).